A 906-amino-acid chain; its full sequence is Protein translocase subunit SecA (906 aa).

ATP is bound by residues Q86, 104-108, and D499; that span reads GEGKT. The interval 863–887 is disordered; it reads PVVSRIDPKDRNPDDPTSWGRVSRN. Residues C890, C892, C901, and H902 each contribute to the Zn(2+) site.

Belongs to the SecA family. In terms of assembly, monomer and homodimer. Part of the essential Sec protein translocation apparatus which comprises SecA, SecYEG and auxiliary proteins SecDF-YajC and YidC. It depends on Zn(2+) as a cofactor.

It localises to the cell inner membrane. The protein resides in the cytoplasm. The enzyme catalyses ATP + H2O + cellular proteinSide 1 = ADP + phosphate + cellular proteinSide 2.. Functionally, part of the Sec protein translocase complex. Interacts with the SecYEG preprotein conducting channel. Has a central role in coupling the hydrolysis of ATP to the transfer of proteins into and across the cell membrane, serving both as a receptor for the preprotein-SecB complex and as an ATP-driven molecular motor driving the stepwise translocation of polypeptide chains across the membrane. The polypeptide is Protein translocase subunit SecA (Rickettsia rickettsii (strain Iowa)).